Consider the following 426-residue polypeptide: UDP-N-acetylglucosamine 1-carboxyvinyltransferase (426 aa).

A phosphoenolpyruvate-binding site is contributed by 22-23; the sequence is KN. Arg-99 contributes to the UDP-N-acetyl-alpha-D-glucosamine binding site. Cys-123 (proton donor) is an active-site residue. Cys-123 carries the post-translational modification 2-(S-cysteinyl)pyruvic acid O-phosphothioketal. UDP-N-acetyl-alpha-D-glucosamine is bound by residues 128–132, Asp-313, and Ile-335; that span reads RPIDL.

This sequence belongs to the EPSP synthase family. MurA subfamily.

It is found in the cytoplasm. It catalyses the reaction phosphoenolpyruvate + UDP-N-acetyl-alpha-D-glucosamine = UDP-N-acetyl-3-O-(1-carboxyvinyl)-alpha-D-glucosamine + phosphate. The protein operates within cell wall biogenesis; peptidoglycan biosynthesis. Its function is as follows. Cell wall formation. Adds enolpyruvyl to UDP-N-acetylglucosamine. The protein is UDP-N-acetylglucosamine 1-carboxyvinyltransferase of Zymomonas mobilis subsp. mobilis (strain ATCC 31821 / ZM4 / CP4).